The sequence spans 419 residues: Endochitinase 2 (419 aa).

The first 18 residues, 1–18 (MHHLRALVGVGLAGLAAG), serve as a signal peptide directing secretion. Residues 35–343 (AQNVVYWGQN…QQAKSILVNG (309 aa)) enclose the GH18 domain. Residue N153 is glycosylated (N-linked (GlcNAc...) asparagine). E173 (proton donor) is an active-site residue. N-linked (GlcNAc...) asparagine glycans are attached at residues N237 and N256. The span at 350–381 (GPPSSTPATAPAPTATTMPSSTSVSSPAASPT) shows a compositional bias: low complexity. The segment at 350–386 (GPPSSTPATAPAPTATTMPSSTSVSSPAASPTGGTVP) is disordered. The region spanning 383-419 (GTVPQWGQCGGEGYSGPTQCVAPYQCVKQGDWWSSCR) is the CBM1 domain.

Belongs to the glycosyl hydrolase 18 family. Chitinase class III subfamily.

It is found in the secreted. The enzyme catalyses Random endo-hydrolysis of N-acetyl-beta-D-glucosaminide (1-&gt;4)-beta-linkages in chitin and chitodextrins.. Secreted chitinase involved in the degradation of chitin, a component of the cell walls of fungi and exoskeletal elements of some animals (including worms and arthropods). Participates in the infection process and directly acts in the penetration process of the host cuticle. This chain is Endochitinase 2 (chi2), found in Metarhizium robertsii (strain ARSEF 23 / ATCC MYA-3075) (Metarhizium anisopliae (strain ARSEF 23)).